The sequence spans 276 residues: Phosphatidylglycerol--prolipoprotein diacylglyceryl transferase (276 aa).

Transmembrane regions (helical) follow at residues 17-37 (LAIR…LWFG), 59-79 (MLFF…VLFY), 95-115 (WEGG…MWLF), 129-149 (FIAP…FING), 176-196 (SQLY…WLFA), 202-222 (MGAV…AAEF), and 237-257 (LSMG…MVVW). Arg-142 is a binding site for a 1,2-diacyl-sn-glycero-3-phospho-(1'-sn-glycerol).

It belongs to the Lgt family.

Its subcellular location is the cell inner membrane. The catalysed reaction is L-cysteinyl-[prolipoprotein] + a 1,2-diacyl-sn-glycero-3-phospho-(1'-sn-glycerol) = an S-1,2-diacyl-sn-glyceryl-L-cysteinyl-[prolipoprotein] + sn-glycerol 1-phosphate + H(+). Its pathway is protein modification; lipoprotein biosynthesis (diacylglyceryl transfer). Its function is as follows. Catalyzes the transfer of the diacylglyceryl group from phosphatidylglycerol to the sulfhydryl group of the N-terminal cysteine of a prolipoprotein, the first step in the formation of mature lipoproteins. The polypeptide is Phosphatidylglycerol--prolipoprotein diacylglyceryl transferase (Cupriavidus pinatubonensis (strain JMP 134 / LMG 1197) (Cupriavidus necator (strain JMP 134))).